Consider the following 358-residue polypeptide: 3-dehydroquinate synthase (358 aa).

Residues 70–75 (DGEQYK), 104–108 (GVIGD), 128–129 (TT), lysine 141, lysine 150, and 168–171 (CLST) contribute to the NAD(+) site. Glutamate 183, histidine 246, and histidine 263 together coordinate Zn(2+).

It belongs to the sugar phosphate cyclases superfamily. Dehydroquinate synthase family. Requires Co(2+) as cofactor. Zn(2+) serves as cofactor. NAD(+) is required as a cofactor.

It is found in the cytoplasm. The enzyme catalyses 7-phospho-2-dehydro-3-deoxy-D-arabino-heptonate = 3-dehydroquinate + phosphate. It participates in metabolic intermediate biosynthesis; chorismate biosynthesis; chorismate from D-erythrose 4-phosphate and phosphoenolpyruvate: step 2/7. In terms of biological role, catalyzes the conversion of 3-deoxy-D-arabino-heptulosonate 7-phosphate (DAHP) to dehydroquinate (DHQ). In Shewanella woodyi (strain ATCC 51908 / MS32), this protein is 3-dehydroquinate synthase.